An 85-amino-acid chain; its full sequence is Small cysteine and glycine repeat-containing protein 5 (85 aa).

The segment at 4 to 69 (CGCGGCGGCG…TCCSCGCGCG (66 aa)) is 10 X 2 AA repeats of CG.

It belongs to the KRTAP type 28 family.

In the hair cortex, hair keratin intermediate filaments are embedded in an interfilamentous matrix, consisting of hair keratin-associated proteins (KRTAP), which are essential for the formation of a rigid and resistant hair shaft through their extensive disulfide bond cross-linking with abundant cysteine residues of hair keratins. The matrix proteins include the high-sulfur and high-glycine-tyrosine keratins. In Homo sapiens (Human), this protein is Small cysteine and glycine repeat-containing protein 5.